Here is a 373-residue protein sequence, read N- to C-terminus: tRNA/tmRNA (uracil-C(5))-methyltransferase (373 aa).

The S-adenosyl-L-methionine site is built by Gln190, Tyr219, Asn224, Glu240, and Asp300. Cys325 functions as the Nucleophile in the catalytic mechanism. Glu359 functions as the Proton acceptor in the catalytic mechanism.

Belongs to the class I-like SAM-binding methyltransferase superfamily. RNA M5U methyltransferase family. TrmA subfamily.

The enzyme catalyses uridine(54) in tRNA + S-adenosyl-L-methionine = 5-methyluridine(54) in tRNA + S-adenosyl-L-homocysteine + H(+). It carries out the reaction uridine(341) in tmRNA + S-adenosyl-L-methionine = 5-methyluridine(341) in tmRNA + S-adenosyl-L-homocysteine + H(+). Functionally, dual-specificity methyltransferase that catalyzes the formation of 5-methyluridine at position 54 (m5U54) in all tRNAs, and that of position 341 (m5U341) in tmRNA (transfer-mRNA). The polypeptide is tRNA/tmRNA (uracil-C(5))-methyltransferase (Chromohalobacter salexigens (strain ATCC BAA-138 / DSM 3043 / CIP 106854 / NCIMB 13768 / 1H11)).